We begin with the raw amino-acid sequence, 259 residues long: Sesquipedalian-2 (259 aa).

Positions 17-121 (PADHTGFLRS…WVKALSRASF (105 aa)) constitute a PH domain. Residues 124–150 (MRLVVRELESQLQDARQSLALHRCASQ) are a coiled coil. Positions 155–178 (SCSKSQAPDHRAPDPENGHFLPRD) are disordered. The segment covering 161 to 178 (APDHRAPDPENGHFLPRD) has biased composition (basic and acidic residues). Residues 223 to 235 (CFSTLHDWYGKEI) carry the F&amp;H motif.

The protein belongs to the sesquipedalian family. Forms homodimers and heterodimers with PHETA1. Interacts with OCRL and INPP5B.

The protein resides in the early endosome. It localises to the recycling endosome. The protein localises to the golgi apparatus. Its subcellular location is the trans-Golgi network. It is found in the cytoplasmic vesicle. The protein resides in the clathrin-coated vesicle. Plays a role in endocytic trafficking. Required for receptor recycling from endosomes, both to the trans-Golgi network and the plasma membrane. The sequence is that of Sesquipedalian-2 from Mus musculus (Mouse).